The chain runs to 367 residues: MGLIMVFSSSIALGDGPKYVNAGRYYFFSRQLIFILIGLFAMAFTFLMPMKFWDSKAFWGYCICFLLLALVLVPGIGREVNYAYRWIPIGPFNFQPSEFAKLTMIVFTSAYTVRKQKSIHGLKGFLPIIIYLGIICFLLINEPDLGATMVVVAIVMSILLLGGLGFALFSLLFLSAVLLVIAAILTAPWRMQRFFAYLDPFSQEHAQNTGYQLTHSLIAVGRGGFFGEGLGLSIEKLHYLPEAHTDFIMAVVGEELGFVGIFFVILLFVLLVRKGLNVGRQAIAMDRLFNGLVAQGVVVWFGVQAIVNLGVCFGVFPTKGLTLPFISYGGSSIVISLMAFGLLLRVDYENRCLMRGQKPLGIGASYA.

9 helical membrane passes run 32 to 52 (LIFILIGLFAMAFTFLMPMKF), 57 to 77 (AFWGYCICFLLLALVLVPGIG), 87 to 107 (IPIGPFNFQPSEFAKLTMIVF), 119 to 139 (IHGLKGFLPIIIYLGIICFLL), 149 to 169 (MVVVAIVMSILLLGGLGFALF), 171 to 191 (LLFLSAVLLVIAAILTAPWRM), 251 to 271 (VVGEELGFVGIFFVILLFVLL), 296 to 316 (GVVVWFGVQAIVNLGVCFGVF), and 323 to 343 (LPFISYGGSSIVISLMAFGLL).

It belongs to the SEDS family. FtsW subfamily.

It is found in the cell inner membrane. The enzyme catalyses [GlcNAc-(1-&gt;4)-Mur2Ac(oyl-L-Ala-gamma-D-Glu-L-Lys-D-Ala-D-Ala)](n)-di-trans,octa-cis-undecaprenyl diphosphate + beta-D-GlcNAc-(1-&gt;4)-Mur2Ac(oyl-L-Ala-gamma-D-Glu-L-Lys-D-Ala-D-Ala)-di-trans,octa-cis-undecaprenyl diphosphate = [GlcNAc-(1-&gt;4)-Mur2Ac(oyl-L-Ala-gamma-D-Glu-L-Lys-D-Ala-D-Ala)](n+1)-di-trans,octa-cis-undecaprenyl diphosphate + di-trans,octa-cis-undecaprenyl diphosphate + H(+). It participates in cell wall biogenesis; peptidoglycan biosynthesis. Its function is as follows. Peptidoglycan polymerase that is essential for cell division. This is Probable peptidoglycan glycosyltransferase FtsW from Taylorella equigenitalis (strain MCE9).